Here is a 343-residue protein sequence, read N- to C-terminus: Tetraacyldisaccharide 4'-kinase (343 aa).

55–62 provides a ligand contact to ATP; it reads TVGGEGKT.

Belongs to the LpxK family.

The catalysed reaction is a lipid A disaccharide + ATP = a lipid IVA + ADP + H(+). The protein operates within glycolipid biosynthesis; lipid IV(A) biosynthesis; lipid IV(A) from (3R)-3-hydroxytetradecanoyl-[acyl-carrier-protein] and UDP-N-acetyl-alpha-D-glucosamine: step 6/6. Transfers the gamma-phosphate of ATP to the 4'-position of a tetraacyldisaccharide 1-phosphate intermediate (termed DS-1-P) to form tetraacyldisaccharide 1,4'-bis-phosphate (lipid IVA). This Chelativorans sp. (strain BNC1) protein is Tetraacyldisaccharide 4'-kinase.